The following is a 391-amino-acid chain: MSRFLICSFALVLLYPAGIDMYLVGLPRIAADLNASEAQLHIAFSVYLAGMAAAMLFAGKMADRSGRKPVAIPGSALFIIASVFCSLAETSTLFLAGRFLQGLGAGCCYVVAFAILRDTLDDRRRAKVLSLLNGITCIIPVLAPVLGHLIMLKFPWQSLFWAMAMMGIAVLMLSLFILKETRPASPAASDKPRENSESLLNRFFLSRVVITTLSVSVILTFVNTSPVLLMEIMGFERGEYATIMALTAGVSMTFSFSTPFALGIFKPRTLMITSQVLFLAAGITLAVSPSHAVSLFGITLICAGFSVGFGVAMSQALGPFSLRAGVASSTLGIAQVCGSSLWIWLAAVVGIGAWNMLIGILIACSIVSLLLIMFVAPGRPVAAHEEIHHHA.

Residues 1-3 lie on the Cytoplasmic side of the membrane; it reads MSR. A helical membrane pass occupies residues 4 to 24; it reads FLICSFALVLLYPAGIDMYLV. The Periplasmic portion of the chain corresponds to 25–37; it reads GLPRIAADLNASE. The helical transmembrane segment at 38-58 threads the bilayer; it reads AQLHIAFSVYLAGMAAAMLFA. The Cytoplasmic portion of the chain corresponds to 59 to 75; the sequence is GKMADRSGRKPVAIPGS. The chain crosses the membrane as a helical span at residues 76 to 96; that stretch reads ALFIIASVFCSLAETSTLFLA. Over 97–98 the chain is Periplasmic; it reads GR. The chain crosses the membrane as a helical span at residues 99–119; that stretch reads FLQGLGAGCCYVVAFAILRDT. Over 120 to 130 the chain is Cytoplasmic; it reads LDDRRRAKVLS. The chain crosses the membrane as a helical span at residues 131 to 151; it reads LLNGITCIIPVLAPVLGHLIM. Residues 152–157 are Periplasmic-facing; sequence LKFPWQ. Residues 158-178 traverse the membrane as a helical segment; the sequence is SLFWAMAMMGIAVLMLSLFIL. Over 179-202 the chain is Cytoplasmic; the sequence is KETRPASPAASDKPRENSESLLNR. A helical transmembrane segment spans residues 203–222; that stretch reads FFLSRVVITTLSVSVILTFV. The Periplasmic portion of the chain corresponds to 223 to 244; it reads NTSPVLLMEIMGFERGEYATIM. A helical membrane pass occupies residues 245–265; sequence ALTAGVSMTFSFSTPFALGIF. Topologically, residues 266–268 are cytoplasmic; it reads KPR. Residues 269–289 traverse the membrane as a helical segment; the sequence is TLMITSQVLFLAAGITLAVSP. The Periplasmic portion of the chain corresponds to 290–292; it reads SHA. The helical transmembrane segment at 293–313 threads the bilayer; sequence VSLFGITLICAGFSVGFGVAM. Over 314-330 the chain is Cytoplasmic; it reads SQALGPFSLRAGVASST. A helical membrane pass occupies residues 331–351; that stretch reads LGIAQVCGSSLWIWLAAVVGI. At 352-355 the chain is on the periplasmic side; it reads GAWN. A helical membrane pass occupies residues 356 to 376; it reads MLIGILIACSIVSLLLIMFVA. The Cytoplasmic portion of the chain corresponds to 377-391; the sequence is PGRPVAAHEEIHHHA.

This sequence belongs to the major facilitator superfamily. DHA1 family. MdtL (TC 2.A.1.2.22) subfamily.

Its subcellular location is the cell inner membrane. The protein is Multidrug resistance protein MdtL of Shigella flexneri serotype 5b (strain 8401).